A 1233-amino-acid polypeptide reads, in one-letter code: Anion exchange protein 3 (1233 aa).

Positions 1–11 (MANGVIPPPGG) are enriched in pro residues. 2 disordered regions span residues 1-320 (MANG…RRPH) and 431-500 (DDKD…DGHR). Topologically, residues 1–709 (MANGVIPPPG…DLRDALHSQC (709 aa)) are cytoplasmic. The span at 58 to 73 (DPEKPSRSFSERDFAF) shows a compositional bias: basic and acidic residues. Basic residues-rich tracts occupy residues 74-97 (HRHI…KLRR) and 104-113 (RHTRRKRKKE). Over residues 137-153 (GEEEEEEEEEGESETEA) the composition is skewed to acidic residues. Residues Ser168, Ser171, Ser176, and Ser199 each carry the phosphoserine modification. Over residues 201–216 (QRSVSSSSPRARAPRV) the composition is skewed to low complexity. Positions 268–290 (DDMKSHRLEDNPGVRRHLVKEPS) are enriched in basic and acidic residues. Arg296 carries the post-translational modification Omega-N-methylarginine. A compositionally biased stretch (low complexity) spans 437 to 450 (SFPRNPSSSSVNSV). The span at 482-500 (HDPDAKERPLHMPGGDGHR) shows a compositional bias: basic and acidic residues. Helical transmembrane passes span 710–732 (VAAV…GLLG), 738–775 (LMGV…LLVF), 795–817 (VWVG…TFLV), and 827–848 (IFAF…YKVF). The tract at residues 710–1233 (VAAVLFIYFA…DEYNELHMPV (524 aa)) is membrane (anion exchange). Asn874 is a glycosylation site (N-linked (GlcNAc...) asparagine). A helical membrane pass occupies residues 894 to 911 (ALLSLILMLGTFLIAFFL). The Cytoplasmic portion of the chain corresponds to 912 to 926 (RKFRNSRFLGGKARR). The next 5 membrane-spanning stretches (helical) occupy residues 927 to 947 (IIGD…DYSI), 981 to 1003 (PFPP…LIFM), 1029 to 1050 (LLLI…LTAA), 1084 to 1129 (VTGV…IQLS), and 1156 to 1192 (MHLF…TVPL). Cys1166 is lipidated: S-palmitoyl cysteine.

This sequence belongs to the anion exchanger (TC 2.A.31) family.

The protein resides in the cell membrane. It catalyses the reaction hydrogencarbonate(in) + chloride(out) = hydrogencarbonate(out) + chloride(in). Sodium-independent anion exchanger which mediates the electroneutral exchange of chloride for bicarbonate ions across the cell membrane. May be involved in the regulation of intracellular pH, and the modulation of cardiac action potential. This chain is Anion exchange protein 3 (SLC4A3), found in Oryctolagus cuniculus (Rabbit).